Here is a 105-residue protein sequence, read N- to C-terminus: U-scoloptoxin(05)-Ssd1a (105 aa).

The N-terminal stretch at 1-24 (MKEAVKMSCLCIFVFLFLFSLTDA) is a signal peptide. The segment at 79–105 (HVPESNQKDGKVSTHMSSCNTDGCNAN) is disordered. The segment covering 92 to 105 (THMSSCNTDGCNAN) has biased composition (polar residues).

Belongs to the scoloptoxin-05 family. Contains 4 disulfide bonds. In terms of tissue distribution, expressed by the venom gland.

It is found in the secreted. This chain is U-scoloptoxin(05)-Ssd1a, found in Scolopendra dehaani (Thai centipede).